Consider the following 138-residue polypeptide: Small ribosomal subunit protein uS11c (138 aa).

The tract at residues 1 to 24 is disordered; sequence MTKPIPRIGSRKNGRISSRKNGRR. A compositionally biased stretch (basic residues) spans 9 to 24; the sequence is GSRKNGRISSRKNGRR.

This sequence belongs to the universal ribosomal protein uS11 family. Part of the 30S ribosomal subunit.

The protein localises to the plastid. It is found in the chloroplast. The sequence is that of Small ribosomal subunit protein uS11c from Chloranthus spicatus (Chulantree).